Here is a 129-residue protein sequence, read N- to C-terminus: C-type natriuretic peptide 1 (129 aa).

An N-terminal signal peptide occupies residues 1-24; that stretch reads MSYKRGTCLGFIMLLMVSHHHTKG. Residues 25–107 constitute a propeptide that is removed on maturation; it reads KPLSSLQNLS…SRRYRQRNKK (83 aa). The cysteines at positions 113 and 129 are disulfide-linked.

The protein belongs to the natriuretic peptide family.

It localises to the secreted. Functionally, hormone which plays a role in endochondral ossification through regulation of cartilaginous growth plate chondrocytes proliferation and differentiation. May also be vasoactive and natriuretic. May be important for freshwater adaptation. The sequence is that of C-type natriuretic peptide 1 from Aquarana catesbeiana (American bullfrog).